A 398-amino-acid chain; its full sequence is Acetate kinase (398 aa).

Asparagine 8 is a Mg(2+) binding site. Position 15 (lysine 15) interacts with ATP. Position 89 (arginine 89) interacts with substrate. Aspartate 146 (proton donor/acceptor) is an active-site residue. ATP-binding positions include 206 to 210, 283 to 285, and 331 to 335; these read HIGNG, DMR, and GMGEN. Glutamate 383 contacts Mg(2+).

The protein belongs to the acetokinase family. Homodimer. Requires Mg(2+) as cofactor. The cofactor is Mn(2+).

It localises to the cytoplasm. The catalysed reaction is acetate + ATP = acetyl phosphate + ADP. The protein operates within metabolic intermediate biosynthesis; acetyl-CoA biosynthesis; acetyl-CoA from acetate: step 1/2. Catalyzes the formation of acetyl phosphate from acetate and ATP. Can also catalyze the reverse reaction. This Streptococcus pyogenes serotype M1 protein is Acetate kinase.